The chain runs to 211 residues: Ribosomal RNA small subunit methyltransferase G (211 aa).

S-adenosyl-L-methionine-binding positions include glycine 78, methionine 83, 129–130, and arginine 144; that span reads AE.

It belongs to the methyltransferase superfamily. RNA methyltransferase RsmG family.

It localises to the cytoplasm. It carries out the reaction guanosine(527) in 16S rRNA + S-adenosyl-L-methionine = N(7)-methylguanosine(527) in 16S rRNA + S-adenosyl-L-homocysteine. In terms of biological role, specifically methylates the N7 position of guanine in position 527 of 16S rRNA. The protein is Ribosomal RNA small subunit methyltransferase G of Pseudomonas syringae pv. tomato (strain ATCC BAA-871 / DC3000).